We begin with the raw amino-acid sequence, 618 residues long: Kelch-like protein 40b (618 aa).

The 68-residue stretch at 33 to 100 (VDCVLKIKDK…LYTSNINVTE (68 aa)) folds into the BTB domain. The 103-residue stretch at 135–237 (CLAIFRLGLM…PRDYFVKNVE (103 aa)) folds into the BACK domain. Residues 264-284 (PELKKTKNKKSPSEEGQKKGD) are compositionally biased toward basic and acidic residues. Positions 264-297 (PELKKTKNKKSPSEEGQKKGDEEEVEEEEEQEER) are disordered. Positions 285-295 (EEEVEEEEEQE) are enriched in acidic residues. 5 Kelch repeats span residues 356–408 (QIFV…EAEN), 409–458 (FIFV…SHNE), 459–506 (MIYV…IHKN), 508–553 (IYVV…SVSG), and 555–608 (LYAV…VLGV).

Belongs to the KLHL40 family. In terms of assembly, component of the BCR(KLHL40) E3 ubiquitin ligase complex. As to expression, expressed in skeletal muscle. Detected in the eye at much lower levels.

The protein localises to the cytoplasm. It localises to the myofibril. Its subcellular location is the sarcomere. The protein resides in the a band. It is found in the i band. Functionally, substrate-specific adapter of a BCR (BTB-CUL3-RBX1) E3 ubiquitin ligase complex. Required for skeletal muscle development. In Danio rerio (Zebrafish), this protein is Kelch-like protein 40b (klhl40b).